Consider the following 550-residue polypeptide: Chaperonin GroEL (550 aa).

ATP contacts are provided by residues 30–33 (TLGP), Lys-51, 87–91 (DGTTT), Gly-414, and Asp-494.

The protein belongs to the chaperonin (HSP60) family. In terms of assembly, forms a cylinder of 14 subunits composed of two heptameric rings stacked back-to-back. Interacts with the co-chaperonin GroES.

The protein resides in the cytoplasm. It carries out the reaction ATP + H2O + a folded polypeptide = ADP + phosphate + an unfolded polypeptide.. Functionally, together with its co-chaperonin GroES, plays an essential role in assisting protein folding. The GroEL-GroES system forms a nano-cage that allows encapsulation of the non-native substrate proteins and provides a physical environment optimized to promote and accelerate protein folding. The sequence is that of Chaperonin GroEL from Buchnera aphidicola subsp. Thelaxes suberi.